A 130-amino-acid chain; its full sequence is DNA-binding protein HU (130 aa).

Belongs to the bacterial histone-like protein family.

Functionally, histone-like DNA-binding protein which is capable of wrapping DNA to stabilize it, and thus to prevent its denaturation under extreme environmental conditions. In Ureaplasma parvum serovar 3 (strain ATCC 700970), this protein is DNA-binding protein HU (hup).